A 116-amino-acid chain; its full sequence is Large ribosomal subunit protein uL18 (116 aa).

It belongs to the universal ribosomal protein uL18 family. As to quaternary structure, part of the 50S ribosomal subunit; part of the 5S rRNA/L5/L18/L25 subcomplex. Contacts the 5S and 23S rRNAs.

Its function is as follows. This is one of the proteins that bind and probably mediate the attachment of the 5S RNA into the large ribosomal subunit, where it forms part of the central protuberance. This is Large ribosomal subunit protein uL18 from Mycoplasma pneumoniae (strain ATCC 29342 / M129 / Subtype 1) (Mycoplasmoides pneumoniae).